Consider the following 211-residue polypeptide: Succinate dehydrogenase subunit 4, mitochondrial (211 aa).

Residues 1-36 (MASRLLARSKALALALSRADAAAPGPAAGVQWLRTL) constitute a mitochondrion transit peptide. The tract at residues 41–64 (RDPAAAASPAPAPRQPAVGSPLGL) is disordered. Residue histidine 166 coordinates heme. Residue tyrosine 179 participates in a ubiquinone binding. A helical membrane pass occupies residues 188-210 (WVFIYFKILLIIMAKETVVYFDL).

Component of complex II composed of eight subunits in plants: four classical SDH subunits SDH1, SDH2, SDH3 and SDH4 (a flavoprotein (FP), an iron-sulfur protein (IP), and a cytochrome b composed of a large and a small subunit.), as well as four subunits unknown in mitochondria from bacteria and heterotrophic eukaryotes. It depends on heme as a cofactor.

The protein resides in the mitochondrion inner membrane. It participates in carbohydrate metabolism; tricarboxylic acid cycle. Its function is as follows. Membrane-anchoring subunit of succinate dehydrogenase (SDH). This Oryza sativa subsp. japonica (Rice) protein is Succinate dehydrogenase subunit 4, mitochondrial.